The primary structure comprises 78 residues: Small ribosomal subunit protein bS18 (78 aa).

The protein belongs to the bacterial ribosomal protein bS18 family. Part of the 30S ribosomal subunit. Forms a tight heterodimer with protein bS6.

Binds as a heterodimer with protein bS6 to the central domain of the 16S rRNA, where it helps stabilize the platform of the 30S subunit. This is Small ribosomal subunit protein bS18 from Limosilactobacillus reuteri (strain DSM 20016) (Lactobacillus reuteri).